The following is an 86-amino-acid chain: Small ribosomal subunit protein uS15 (86 aa).

The disordered stretch occupies residues 1–22 (MSIDTQKVIEDNKRSSADTGSP). The span at 7–16 (KVIEDNKRSS) shows a compositional bias: basic and acidic residues.

Belongs to the universal ribosomal protein uS15 family. As to quaternary structure, part of the 30S ribosomal subunit. Forms a bridge to the 50S subunit in the 70S ribosome, contacting the 23S rRNA.

One of the primary rRNA binding proteins, it binds directly to 16S rRNA where it helps nucleate assembly of the platform of the 30S subunit by binding and bridging several RNA helices of the 16S rRNA. Its function is as follows. Forms an intersubunit bridge (bridge B4) with the 23S rRNA of the 50S subunit in the ribosome. This is Small ribosomal subunit protein uS15 from Stenotrophomonas maltophilia (strain R551-3).